The primary structure comprises 137 residues: MSVQKMMPIINYLGTGRRKSAVARVRLVPGNGEVIINGLPGTNYLQFNGSYLSAVRSPLETLGLEDNYDIIVKAVGGGLTGQAEAIRLGVARALCTIDTSNRHPLKKEGFLTRDSRVKERKKYGLKKARKAPQFSKR.

This sequence belongs to the universal ribosomal protein uS9 family.

Its subcellular location is the plastid. It localises to the chloroplast. The protein is Small ribosomal subunit protein uS9c (rps9) of Mesostigma viride (Green alga).